The chain runs to 570 residues: Proline--tRNA ligase (570 aa).

It belongs to the class-II aminoacyl-tRNA synthetase family. ProS type 1 subfamily. Homodimer.

Its subcellular location is the cytoplasm. The enzyme catalyses tRNA(Pro) + L-proline + ATP = L-prolyl-tRNA(Pro) + AMP + diphosphate. Functionally, catalyzes the attachment of proline to tRNA(Pro) in a two-step reaction: proline is first activated by ATP to form Pro-AMP and then transferred to the acceptor end of tRNA(Pro). As ProRS can inadvertently accommodate and process non-cognate amino acids such as alanine and cysteine, to avoid such errors it has two additional distinct editing activities against alanine. One activity is designated as 'pretransfer' editing and involves the tRNA(Pro)-independent hydrolysis of activated Ala-AMP. The other activity is designated 'posttransfer' editing and involves deacylation of mischarged Ala-tRNA(Pro). The misacylated Cys-tRNA(Pro) is not edited by ProRS. The polypeptide is Proline--tRNA ligase (Acidithiobacillus ferrooxidans (strain ATCC 23270 / DSM 14882 / CIP 104768 / NCIMB 8455) (Ferrobacillus ferrooxidans (strain ATCC 23270))).